We begin with the raw amino-acid sequence, 125 residues long: Holo-[acyl-carrier-protein] synthase (125 aa).

Residues Asp-8 and Glu-57 each contribute to the Mg(2+) site.

Belongs to the P-Pant transferase superfamily. AcpS family. Requires Mg(2+) as cofactor.

The protein resides in the cytoplasm. The enzyme catalyses apo-[ACP] + CoA = holo-[ACP] + adenosine 3',5'-bisphosphate + H(+). Functionally, transfers the 4'-phosphopantetheine moiety from coenzyme A to a Ser of acyl-carrier-protein. The chain is Holo-[acyl-carrier-protein] synthase from Dechloromonas aromatica (strain RCB).